The following is a 742-amino-acid chain: Probable LRR receptor-like serine/threonine-protein kinase At2g02780 (742 aa).

A signal peptide spans Met1–Ser25. The Extracellular segment spans residues Glu26–Leu354. LRR repeat units follow at residues His74–Lys96, Leu104–Lys128, Ser130–Leu154, Asn156–Gly177, Leu178–Thr204, Ser206–Leu223, Asn224–Ile247, Ser249–Ser271, and Lys273–Ser294. An N-linked (GlcNAc...) asparagine glycan is attached at Asn85. An N-linked (GlcNAc...) asparagine glycan is attached at Asn137. The N-linked (GlcNAc...) asparagine glycan is linked to Asn209. An N-linked (GlcNAc...) asparagine glycan is attached at Asn266. The N-linked (GlcNAc...) asparagine glycan is linked to Asn299. Residues Val355–Ile375 form a helical membrane-spanning segment. Topologically, residues Ala376–Glu742 are cytoplasmic. The segment at Asp386–Pro424 is disordered. Over residues Val406–Leu417 the composition is skewed to polar residues. Positions Thr426–Ile720 constitute a Protein kinase domain.

Belongs to the protein kinase superfamily. Ser/Thr protein kinase family.

The protein resides in the membrane. The enzyme catalyses L-seryl-[protein] + ATP = O-phospho-L-seryl-[protein] + ADP + H(+). The catalysed reaction is L-threonyl-[protein] + ATP = O-phospho-L-threonyl-[protein] + ADP + H(+). The chain is Probable LRR receptor-like serine/threonine-protein kinase At2g02780 from Arabidopsis thaliana (Mouse-ear cress).